Reading from the N-terminus, the 192-residue chain is Protein GrpE (192 aa).

The protein belongs to the GrpE family. In terms of assembly, homodimer.

The protein resides in the cytoplasm. Its function is as follows. Participates actively in the response to hyperosmotic and heat shock by preventing the aggregation of stress-denatured proteins, in association with DnaK and GrpE. It is the nucleotide exchange factor for DnaK and may function as a thermosensor. Unfolded proteins bind initially to DnaJ; upon interaction with the DnaJ-bound protein, DnaK hydrolyzes its bound ATP, resulting in the formation of a stable complex. GrpE releases ADP from DnaK; ATP binding to DnaK triggers the release of the substrate protein, thus completing the reaction cycle. Several rounds of ATP-dependent interactions between DnaJ, DnaK and GrpE are required for fully efficient folding. The chain is Protein GrpE from Neisseria gonorrhoeae (strain NCCP11945).